Here is a 353-residue protein sequence, read N- to C-terminus: Nucleotide-binding protein sce5766 (353 aa).

Position 27–34 (27–34) interacts with ATP; sequence GLSGAGKS. 76–79 provides a ligand contact to GTP; the sequence is DVRV. The interval 310-353 is disordered; that stretch reads SGVPSGVGEGMAGAPGVDLRLAQPGATPSEPRPASDTSVTGGER. The segment covering 344–353 has biased composition (polar residues); that stretch reads SDTSVTGGER.

It belongs to the RapZ-like family.

In terms of biological role, displays ATPase and GTPase activities. The polypeptide is Nucleotide-binding protein sce5766 (Sorangium cellulosum (strain So ce56) (Polyangium cellulosum (strain So ce56))).